We begin with the raw amino-acid sequence, 278 residues long: Large ribosomal subunit protein uL2 (278 aa).

2 disordered regions span residues 29–53 (PEKSLVRPLSKTGGRNSSGRITTRH) and 223–278 (GVAM…GKKR). Basic and acidic residues predominate over residues 255–268 (GRTRRPGKESDKLI). The segment covering 269 to 278 (VRRRRTGKKR) has biased composition (basic residues).

It belongs to the universal ribosomal protein uL2 family. As to quaternary structure, part of the 50S ribosomal subunit. Forms a bridge to the 30S subunit in the 70S ribosome.

Its function is as follows. One of the primary rRNA binding proteins. Required for association of the 30S and 50S subunits to form the 70S ribosome, for tRNA binding and peptide bond formation. It has been suggested to have peptidyltransferase activity; this is somewhat controversial. Makes several contacts with the 16S rRNA in the 70S ribosome. In Kineococcus radiotolerans (strain ATCC BAA-149 / DSM 14245 / SRS30216), this protein is Large ribosomal subunit protein uL2.